Here is a 572-residue protein sequence, read N- to C-terminus: Proline--tRNA ligase (572 aa).

It belongs to the class-II aminoacyl-tRNA synthetase family. ProS type 1 subfamily. In terms of assembly, homodimer.

The protein resides in the cytoplasm. It carries out the reaction tRNA(Pro) + L-proline + ATP = L-prolyl-tRNA(Pro) + AMP + diphosphate. In terms of biological role, catalyzes the attachment of proline to tRNA(Pro) in a two-step reaction: proline is first activated by ATP to form Pro-AMP and then transferred to the acceptor end of tRNA(Pro). As ProRS can inadvertently accommodate and process non-cognate amino acids such as alanine and cysteine, to avoid such errors it has two additional distinct editing activities against alanine. One activity is designated as 'pretransfer' editing and involves the tRNA(Pro)-independent hydrolysis of activated Ala-AMP. The other activity is designated 'posttransfer' editing and involves deacylation of mischarged Ala-tRNA(Pro). The misacylated Cys-tRNA(Pro) is not edited by ProRS. The chain is Proline--tRNA ligase from Escherichia coli O127:H6 (strain E2348/69 / EPEC).